Here is a 272-residue protein sequence, read N- to C-terminus: Hemin import ATP-binding protein HmuV (272 aa).

The ABC transporter domain maps to 2–255 (LNADHLHVAR…EPIARCYGFR (254 aa)). Position 34–41 (34–41 (GRNGAGKS)) interacts with ATP.

This sequence belongs to the ABC transporter superfamily. Heme (hemin) importer (TC 3.A.1.14.5) family. In terms of assembly, the complex is composed of two ATP-binding proteins (HmuV), two transmembrane proteins (HmuU) and a solute-binding protein (HmuT).

The protein localises to the cell inner membrane. Functionally, part of the ABC transporter complex HmuTUV involved in hemin import. Responsible for energy coupling to the transport system. This Burkholderia pseudomallei (strain 1710b) protein is Hemin import ATP-binding protein HmuV.